A 901-amino-acid chain; its full sequence is Vacuolar protein sorting-associated protein 41 homolog (901 aa).

The disordered stretch occupies residues 1–37 (MDETHENEASDSFDPVFENSYHDDVTFNTEDDDEPPL). The CHCR repeat unit spans residues 618 to 760 (LRLLLDNADS…VAEFPAHFSQ (143 aa)). An RING-type; atypical zinc finger spans residues 839–893 (CSLCAQIIINSNQETTKKFSDIKVFKCGHIFHLACSTSEMERRQSIEEGLCIACS).

Belongs to the VPS41 family. Probable component of the homotypic fusion and vacuole protein sorting (HOPS) complex consisting of the core class C Vps proteins vps-11, vps-16, vps-18, and which further associates with vps-33.1, vps-39 and vps-41.

The protein localises to the endosome membrane. Its subcellular location is the late endosome membrane. It localises to the early endosome membrane. It is found in the lysosome membrane. The protein resides in the golgi apparatus. The protein localises to the trans-Golgi network. Its subcellular location is the cytoplasmic vesicle. It localises to the clathrin-coated vesicle. It is found in the cytoplasm. The protein resides in the cytosol. Functionally, plays a role in vesicle-mediated protein trafficking to lysosomal compartments including the endocytic membrane transport pathways. Believed to act in part as a core component of the putative HOPS endosomal tethering complex which is proposed to be involved in the rab-5-to-rab-7 endosome conversion probably implicating sand-1, and via binding SNAREs and SNARE complexes to mediate tethering and docking events during SNARE-mediated membrane fusion. The HOPS complex is proposed to be recruited to rab-7 on the late endosomal membrane and to regulate late endocytic, phagocytic and autophagic traffic towards lysosomes. Within the HOPS complex, contributes to the normal development of gut granules in the adult intestine. May mediate the tethering of autophagosomes with lysosomes. Has a role in the negative regulation of apoptosis. Required for uptake of exogenous dsRNA which is used in experimental RNA silencing. The polypeptide is Vacuolar protein sorting-associated protein 41 homolog (Caenorhabditis elegans).